A 435-amino-acid chain; its full sequence is MGQELCAKTVQPGCSCYHCSEGGEAHSCRRSQPETTEAAFKLTDLKEASCSMTSFHPRGLQAARAQKFKSKRPRSNSDCFQEEDLRQGFQWRKSLPFGAASSYLNLEKLGEGSYATVYKGISRINGQLVALKVISMNAEEGVPFTAIREASLLKGLKHANIVLLHDIIHTKETLTFVFEYMHTDLAQYMSQHPGGLHPHNVRLFMFQLLRGLAYIHHQHVLHRDLKPQNLLISHLGELKLADFGLARAKSIPSQTYSSEVVTLWYRPPDALLGATEYSSELDIWGAGCIFIEMFQGQPLFPGVSNILEQLEKIWEVLGVPTEDTWPGVSKLPNYNPEWFPLPTPRSLHVVWNRLGRVPEAEDLASQMLKGFPRDRVSAQEALVHDYFSALPSQLYQLPDEESLFTVSGVRLKPEMCDLLASYQKGHHPAQFSKCW.

A Protein kinase domain is found at 103–387 (YLNLEKLGEG…AQEALVHDYF (285 aa)). ATP is bound by residues 109–117 (LGEGSYATV) and lysine 132. Catalysis depends on aspartate 224, which acts as the Proton acceptor.

Belongs to the protein kinase superfamily. CMGC Ser/Thr protein kinase family. CDC2/CDKX subfamily. Mg(2+) is required as a cofactor.

The enzyme catalyses L-seryl-[protein] + ATP = O-phospho-L-seryl-[protein] + ADP + H(+). The catalysed reaction is L-threonyl-[protein] + ATP = O-phospho-L-threonyl-[protein] + ADP + H(+). Its function is as follows. Serine/threonine-protein kinase that acts like an antiapoptotic protein that counters TRAIL/TNFSF10-induced apoptosis by inducing phosphorylation of BIRC5 at 'Thr-34'. This Homo sapiens (Human) protein is Cyclin-dependent kinase 15 (CDK15).